A 343-amino-acid chain; its full sequence is UDP-3-O-acylglucosamine N-acyltransferase (343 aa).

The active-site Proton acceptor is the H236.

The protein belongs to the transferase hexapeptide repeat family. LpxD subfamily. In terms of assembly, homotrimer.

It carries out the reaction a UDP-3-O-[(3R)-3-hydroxyacyl]-alpha-D-glucosamine + a (3R)-hydroxyacyl-[ACP] = a UDP-2-N,3-O-bis[(3R)-3-hydroxyacyl]-alpha-D-glucosamine + holo-[ACP] + H(+). Its pathway is bacterial outer membrane biogenesis; LPS lipid A biosynthesis. Its function is as follows. Catalyzes the N-acylation of UDP-3-O-acylglucosamine using 3-hydroxyacyl-ACP as the acyl donor. Is involved in the biosynthesis of lipid A, a phosphorylated glycolipid that anchors the lipopolysaccharide to the outer membrane of the cell. The protein is UDP-3-O-acylglucosamine N-acyltransferase of Syntrophotalea carbinolica (strain DSM 2380 / NBRC 103641 / GraBd1) (Pelobacter carbinolicus).